Here is a 695-residue protein sequence, read N- to C-terminus: Follicle-stimulating hormone receptor (695 aa).

The first 17 residues, 1-17 (MSLLLVSLLAFLTLGSG), serve as a signal peptide directing secretion. 2 disulfide bridges follow: Cys18/Cys25 and Cys23/Cys32. The 29-residue stretch at 18–46 (CHHRICHCSNGVFLCQESKVTEIPPDLPR) folds into the LRRNT domain. Over 18–366 (CHHRICHCSN…EDIMGHDILR (349 aa)) the chain is Extracellular. 9 LRR repeats span residues 49 to 72 (VELR…FGDL), 73 to 97 (EKIE…LPKL), 98 to 118 (HEIR…AFQN), 119 to 143 (LPNL…KIQS), 144 to 169 (LQKV…VGLS), 170 to 192 (FESM…AFNG), 193 to 216 (TQLD…VFQG), 217 to 240 (ASGP…GLEN), and 241 to 259 (LKKL…PSLE). Asn191 and Asn199 each carry an N-linked (GlcNAc...) asparagine glycan. Cystine bridges form between Cys275–Cys346, Cys276–Cys292, Cys276–Cys356, and Cys292–Cys338. Asn293 carries an N-linked (GlcNAc...) asparagine glycan. A Sulfotyrosine modification is found at Tyr335. The helical transmembrane segment at 367 to 387 (VLIWFISILAITGNIIVLVIL) threads the bilayer. Over 388 to 398 (ITSQYKLTVPR) the chain is Cytoplasmic. Residues 399-421 (FLMCNLAFADLCIGIYLLLIASV) traverse the membrane as a helical segment. Over 422–443 (DIHTKTQYHNYAIDWQTGAGCD) the chain is Extracellular. Cys442 and Cys517 form a disulfide bridge. A helical transmembrane segment spans residues 444 to 465 (AAGFFTVFASELSVYTLTAITL). Over 466–485 (ERWHTITHAMQLQCKVQLRH) the chain is Cytoplasmic. A helical membrane pass occupies residues 486–508 (AASIMLVGWIFAFTVALFPIFGI). Topologically, residues 509–528 (SSYMKVSICLPMDIDSPLSQ) are extracellular. A helical transmembrane segment spans residues 529–550 (LYVVSLLVLNVLAFVVICGCYT). The Cytoplasmic portion of the chain corresponds to 551–573 (HIYLTVRNPNIMSSSSDTKIAKR). A helical membrane pass occupies residues 574 to 597 (MAMLIFTDFLCMAPISFFAISASL). Over 598 to 608 (KVPLITVSKSK) the chain is Extracellular. Residues 609 to 630 (ILLVLFYPINSCANPFLYAIFT) traverse the membrane as a helical segment. The Cytoplasmic portion of the chain corresponds to 631-695 (KNFRRDVFIL…LIPLSRLAQN (65 aa)).

The protein belongs to the G-protein coupled receptor 1 family. FSH/LSH/TSH subfamily. Homotrimer. Functions as a homotrimer binding the FSH hormone heterodimer composed of CGA and FSHB. Interacts with ARRB2. Interacts with APPL2; interaction is independent of follicle stimulating hormone stimulation. Post-translationally, N-glycosylated; indirectly required for FSH-binding, possibly via a conformational change that allows high affinity binding of hormone. Sulfated.

It localises to the cell membrane. G protein-coupled receptor for follitropin, the follicle-stimulating hormone. Through cAMP production activates the downstream PI3K-AKT and ERK1/ERK2 signaling pathways. The protein is Follicle-stimulating hormone receptor (FSHR) of Sus scrofa (Pig).